We begin with the raw amino-acid sequence, 711 residues long: MKFFASCAKGLEYLLADELLALGASKATATISGVNVEGALRDAQRAVLWSRLASRVLWPLTEFDCPDEDALYAGVAELPWHEHLSTGHTLSVDAHVSGTAITHARYAAQRIKDAVVDTIRRQGLERPSVDVESPDLRLNLSLRKGRATISVDLGGGPLHRRGWRMAQNEAPLKENLAAAVLLRAGWPRAYADGGGLLDPMCGSGTLLIEGALMAADVAPGLQRYGSDIPSRWRGFDRDSWQQLVTEARERDSVGRAALKQVIHGSDMDPHAIRAAKENAQVAGVAEAIWFGVREVGDLQTRPQATGVVVCNPPYDERLAADAALYRKLGDTLQRVVPQWRASLLCGNAELAYATGLRAGKKYQLFNGAIECALIVCDPIAVPRRTPLAAPTALSEGAQMVANRLRKNLQKFKKWRAREGIECFRVYDADLPEYSAAIDVYQQADGDRRIFLHVQEYAAPATIPEADVRRRLGELLAAAREVFEVPAERVALKSRERGKGGSKYGRFEQRNEIVNVREHGALLRVNLFDYLDTGLFLDHRPLRGTMAQQSKGRRFLNLFCYTGVASVQAAVAGASATTSVDLSGTYLQWCADNLALNGQAGSKHKLVQADALAWLEAERAHFDVIFCDPPTFSNSARAEDFDIQREHVRLLRAAVARLAPGGVLYFSNNFRRFKLDEEAVAEFAQCEEISPRTIDPDFERHVRIHRAWRLTA.

Residues 42–153 (DAQRAVLWSR…KGRATISVDL (112 aa)) form the THUMP domain.

The protein belongs to the methyltransferase superfamily. RlmKL family.

It is found in the cytoplasm. It catalyses the reaction guanosine(2445) in 23S rRNA + S-adenosyl-L-methionine = N(2)-methylguanosine(2445) in 23S rRNA + S-adenosyl-L-homocysteine + H(+). The catalysed reaction is guanosine(2069) in 23S rRNA + S-adenosyl-L-methionine = N(2)-methylguanosine(2069) in 23S rRNA + S-adenosyl-L-homocysteine + H(+). Its function is as follows. Specifically methylates the guanine in position 2445 (m2G2445) and the guanine in position 2069 (m7G2069) of 23S rRNA. This Xanthomonas campestris pv. campestris (strain B100) protein is Ribosomal RNA large subunit methyltransferase K/L.